The sequence spans 406 residues: 4-hydroxy-3-methylbut-2-en-1-yl diphosphate synthase (ferredoxin) (406 aa).

[4Fe-4S] cluster is bound by residues Cys-315, Cys-318, Cys-349, and Glu-356.

This sequence belongs to the IspG family. [4Fe-4S] cluster is required as a cofactor.

It carries out the reaction (2E)-4-hydroxy-3-methylbut-2-enyl diphosphate + 2 oxidized [2Fe-2S]-[ferredoxin] + H2O = 2-C-methyl-D-erythritol 2,4-cyclic diphosphate + 2 reduced [2Fe-2S]-[ferredoxin] + H(+). Its pathway is isoprenoid biosynthesis; isopentenyl diphosphate biosynthesis via DXP pathway; isopentenyl diphosphate from 1-deoxy-D-xylulose 5-phosphate: step 5/6. Its function is as follows. Converts 2C-methyl-D-erythritol 2,4-cyclodiphosphate (ME-2,4cPP) into 1-hydroxy-2-methyl-2-(E)-butenyl 4-diphosphate. This is 4-hydroxy-3-methylbut-2-en-1-yl diphosphate synthase (ferredoxin) from Microcystis aeruginosa (strain NIES-843 / IAM M-2473).